The chain runs to 338 residues: Glyceraldehyde-3-phosphate dehydrogenase, cytosolic (338 aa).

NAD(+)-binding positions include 13-14, Asp35, and Arg82; that span reads RI. Residues 153-155, Thr184, 213-214, and Arg236 contribute to the D-glyceraldehyde 3-phosphate site; these read SCT and TG. Cys154 (nucleophile) is an active-site residue. Asn318 contributes to the NAD(+) binding site.

The protein belongs to the glyceraldehyde-3-phosphate dehydrogenase family. In terms of assembly, homotetramer.

The protein resides in the cytoplasm. The enzyme catalyses D-glyceraldehyde 3-phosphate + phosphate + NAD(+) = (2R)-3-phospho-glyceroyl phosphate + NADH + H(+). It participates in carbohydrate degradation; glycolysis; pyruvate from D-glyceraldehyde 3-phosphate: step 1/5. Key enzyme in glycolysis that catalyzes the first step of the pathway by converting D-glyceraldehyde 3-phosphate (G3P) into 3-phospho-D-glyceroyl phosphate. Essential for the maintenance of cellular ATP levels and carbohydrate metabolism. The sequence is that of Glyceraldehyde-3-phosphate dehydrogenase, cytosolic (GAPC) from Dianthus caryophyllus (Carnation).